Consider the following 680-residue polypeptide: Zinc finger protein OBI1 (680 aa).

The region spanning 16-87 is the KRAB domain; sequence VSFEDVAVDF…AEATEQCLPG (72 aa). A C2H2-type 1; degenerate zinc finger spans residues 263–280; the sequence is CHKIFPNKTELSNHDAMH. C2H2-type zinc fingers lie at residues 455–477, 483–505, 511–533, 539–561, 567–589, 595–617, 623–645, and 651–673; these read FRCNDCLKTFSHKSQLERHQRMH, HECKECRKAFCHKSHLIRHQGIH, YECNECKKSFYLRSQLTLHERTH, FECKECRKAFSRNSHLTQHQKIH, HKCKECGNAFARKSHLIQHQKTH, YECKECRKAFSRKSQLMQHETTH, YECKECRKTFYLKAYLTRHQVIH, and FECKKCGKAFSRKSYLTRHQKIH.

Post-translationally, polyubiquitinated, leading to its degradation via the ubiquitin-proteasome pathway. Expressed during osteogenic differentiation where levels increase from the first days of differentiation and remain high during the whole process. Highly expressed in lung.

The protein localises to the nucleus. Functionally, may modulate osteogenic differentiation, at least in part, through the bone morphogenetic protein (BMP) signaling pathway, increasing RUNX2 activation and leading to osteoblast commitment and maturation. This is Zinc finger protein OBI1 (ObI1) from Mus musculus (Mouse).